The primary structure comprises 234 residues: 3,4-dihydroxy-2-butanone 4-phosphate synthase (234 aa).

D-ribulose 5-phosphate is bound by residues 39–40 (RE), aspartate 44, 152–156 (RRGHT), and glutamate 176. Glutamate 40 serves as a coordination point for Mg(2+). Histidine 155 lines the Mg(2+) pocket.

The protein belongs to the DHBP synthase family. As to quaternary structure, homodimer. Requires Mg(2+) as cofactor. Mn(2+) serves as cofactor.

It catalyses the reaction D-ribulose 5-phosphate = (2S)-2-hydroxy-3-oxobutyl phosphate + formate + H(+). The protein operates within cofactor biosynthesis; riboflavin biosynthesis; 2-hydroxy-3-oxobutyl phosphate from D-ribulose 5-phosphate: step 1/1. Its function is as follows. Catalyzes the conversion of D-ribulose 5-phosphate to formate and 3,4-dihydroxy-2-butanone 4-phosphate. The chain is 3,4-dihydroxy-2-butanone 4-phosphate synthase from Pelobacter propionicus (strain DSM 2379 / NBRC 103807 / OttBd1).